We begin with the raw amino-acid sequence, 1288 residues long: Contactin-associated protein-like 3 (1288 aa).

An N-terminal signal peptide occupies residues 1–25 (MASVAWAVLKVLLLLPTQTWSPVGA). Residues 26–1245 (GNPPDCDAPL…LVNADRRDSA (1220 aa)) lie on the Extracellular side of the membrane. Positions 31–177 (CDAPLASALP…IGMRIEVYGC (147 aa)) constitute an F5/8 type C domain. Cys31 and Cys177 are joined by a disulfide. Laminin G-like domains are found at residues 183–364 (VVYF…SFSC) and 370–545 (VPVT…IDSC). N-linked (GlcNAc...) asparagine glycosylation is found at Asn285, Asn359, Asn441, and Asn497. An intrachain disulfide couples Cys332 to Cys364. Cystine bridges form between Cys513-Cys545, Cys551-Cys562, Cys556-Cys571, and Cys573-Cys583. In terms of domain architecture, EGF-like 1 spans 551–583 (CLPSYCEHGGECSQSWDTFSCDCLGTGYTGETC). Residues 584 to 792 (HSSLYEQSCE…LLCRGDQSFW (209 aa)) form the Fibrinogen C-terminal domain. Asn623 and Asn706 each carry an N-linked (GlcNAc...) asparagine glycan. In terms of domain architecture, Laminin G-like 3 spans 793-958 (NSASFNTETS…TVTPGVEPGC (166 aa)). Disulfide bonds link Cys931–Cys958, Cys962–Cys975, Cys969–Cys984, and Cys986–Cys996. Residues 962–996 (CSTYGHLCRNGGRCREKRRGVTCDCAFSAYDGPFC) enclose the EGF-like 2 domain. The region spanning 1015–1203 (QEHYTLSENS…RGHVAPMARC (189 aa)) is the Laminin G-like 4 domain. Residues Asn1023, Asn1073, and Asn1120 are each glycosylated (N-linked (GlcNAc...) asparagine). Cys1167 and Cys1203 are disulfide-bonded. Positions 1215 to 1236 (ELAPRLAGGAGRSGPADEGEPL) are disordered. A helical transmembrane segment spans residues 1246–1266 (VIGGVIAVVIFILLCITAIAI). The Cytoplasmic portion of the chain corresponds to 1267-1288 (RIYQQRKLRKENESKVSKKEEC).

The protein belongs to the neurexin family.

The protein localises to the cell membrane. It localises to the secreted. This chain is Contactin-associated protein-like 3 (CNTNAP3), found in Homo sapiens (Human).